The primary structure comprises 278 residues: Bifunctional protein FolD (278 aa).

NADP(+) is bound by residues 163 to 165, Ser-188, and Val-229; that span reads GRS.

This sequence belongs to the tetrahydrofolate dehydrogenase/cyclohydrolase family. In terms of assembly, homodimer.

It carries out the reaction (6R)-5,10-methylene-5,6,7,8-tetrahydrofolate + NADP(+) = (6R)-5,10-methenyltetrahydrofolate + NADPH. It catalyses the reaction (6R)-5,10-methenyltetrahydrofolate + H2O = (6R)-10-formyltetrahydrofolate + H(+). The protein operates within one-carbon metabolism; tetrahydrofolate interconversion. Its function is as follows. Catalyzes the oxidation of 5,10-methylenetetrahydrofolate to 5,10-methenyltetrahydrofolate and then the hydrolysis of 5,10-methenyltetrahydrofolate to 10-formyltetrahydrofolate. In Exiguobacterium sp. (strain ATCC BAA-1283 / AT1b), this protein is Bifunctional protein FolD.